A 455-amino-acid polypeptide reads, in one-letter code: Beta-cyclopiazonate dehydrogenase (455 aa).

A signal peptide spans 1-20; that stretch reads MATRIASFIGISTVASLALA.

Belongs to the beta-cyclopiazonate dehydrogenase family. FAD serves as cofactor.

It catalyses the reaction beta-cyclopiazonate + A = alpha-cyclopiazonate + AH2. Its function is as follows. Beta-cyclopiazonate dehydrogenase involved in the synthesis of the fungal neurotoxin alpha-cyclopiazonic acid (CPA). CpaO carries out the dehydrogenation of beta-CPA to yield an unstable enimine product, which is captured by intramolecular cyclization to create the pentacyclic fused scaffold of alpha-cyclopiazonate. The chain is Beta-cyclopiazonate dehydrogenase from Aspergillus flavus (strain ATCC 200026 / FGSC A1120 / IAM 13836 / NRRL 3357 / JCM 12722 / SRRC 167).